A 754-amino-acid polypeptide reads, in one-letter code: Gelsolin, cytoplasmic (754 aa).

The segment at 1 to 120 (MVPAFEGAGA…RYLKGGVASG (120 aa)) is actin-severing. The Gelsolin-like 1 repeat unit spans residues 22–71 (FEVVPYPKEKYGQFYQGDSYIVLYTRDVNGNLSWDLHFWLGSETSQDEAG). An actin-actin interfilament contact point region spans residues 68–71 (DEAG). A 1,2-diacyl-sn-glycero-3-phospho-(1D-myo-inositol-4,5-bisphosphate) contacts are provided by residues 101–108 (LFLSRFKK) and 133–141 (RLFHVKGRR). A Gelsolin-like 2 repeat occupies 143–183 (IRIRQVEVGVGSMNKGDCFILDCGSQVYAYMGPSSRKMDRL). The interval 209 to 238 (TASGSEAGESSPGLGGGSPDDVADEDTGVD) is disordered. Residues 210–220 (ASGSEAGESSP) show a composition bias toward low complexity. Gelsolin-like repeat units lie at residues 266–306 (NMIG…KEKV), 414–463 (LKLE…DEKA), 538–580 (FDTR…EEKA), and 643–684 (LRVN…QEKE). An actin-binding, Ca-sensitive region spans residues 386–751 (LLQKNAGPAF…MKAQVPETNA (366 aa)). Residues glycine 430, aspartate 431, glutamate 461, aspartate 556, glutamate 578, aspartate 659, aspartate 660, and glutamate 682 each coordinate Ca(2+).

The protein belongs to the villin/gelsolin family. In terms of tissue distribution, tail muscle.

The protein localises to the cytoplasm. It is found in the cytoskeleton. In terms of biological role, calcium-regulated, actin-modulating protein that binds to the plus (or barbed) ends of actin monomers or filaments, preventing monomer exchange (end-blocking or capping). It can promote the assembly of monomers into filaments (nucleation) as well as sever filaments already formed. In Homarus americanus (American lobster), this protein is Gelsolin, cytoplasmic.